Reading from the N-terminus, the 30-residue chain is Ornithine carbamoyltransferase, catabolic (30 aa).

It belongs to the aspartate/ornithine carbamoyltransferase superfamily. OTCase family.

It localises to the cytoplasm. The catalysed reaction is carbamoyl phosphate + L-ornithine = L-citrulline + phosphate + H(+). The protein operates within amino-acid degradation; L-arginine degradation via ADI pathway; carbamoyl phosphate from L-arginine: step 2/2. The polypeptide is Ornithine carbamoyltransferase, catabolic (arcB) (Aeromonas caviae (Aeromonas punctata)).